The following is a 376-amino-acid chain: N-acetyldiaminopimelate deacetylase (376 aa).

Aspartate 70 is a catalytic residue. Glutamate 129 serves as the catalytic Proton acceptor.

Belongs to the peptidase M20A family. N-acetyldiaminopimelate deacetylase subfamily.

It catalyses the reaction N-acetyl-(2S,6S)-2,6-diaminopimelate + H2O = (2S,6S)-2,6-diaminopimelate + acetate. It participates in amino-acid biosynthesis; L-lysine biosynthesis via DAP pathway; LL-2,6-diaminopimelate from (S)-tetrahydrodipicolinate (acetylase route): step 3/3. In terms of biological role, catalyzes the conversion of N-acetyl-diaminopimelate to diaminopimelate and acetate. The polypeptide is N-acetyldiaminopimelate deacetylase (Geobacillus sp. (strain WCH70)).